A 439-amino-acid chain; its full sequence is MSDALPATFDVIVHPARELRGELRAQPSKNYTTRYLLAAALAEGETRVVGVATSEDAEAMLRCLRDWGAGVELVGDDAVIRGFGARPQAGVTLNPGNAGAVARFLMGVAALTSGTTFVTDYPDSLGKRPQGDLLEALERLGAWVSSNDGRLPISVSGPVRGGTVEVSAERSSQYASALMFLGPLLPDGLELRLTGDIKSHAPLRQTLDTLSDFGVRATASDDLRRISIPGGQKYRPGRVLVPGDYPGSAAILTAAALLPGEVRLSNLREHDLQGEKEAVNVLREMGADIVREGDTLTVRGGRPLHAVTRDGDSFTDAVQALTAAAAFAEGDTTWENVATLRLKECDRISDTRAELERLGLRARETADSLSVTGSAHLAGGITADGHGDHRMIMLLTLLGLRADAPLRITGAHHIRKSYPQFFAHLEALGARFEYAEATA.

Residues Lys-29 and Arg-34 each coordinate 3-phosphoshikimate. Residue Lys-29 participates in phosphoenolpyruvate binding. 2 residues coordinate phosphoenolpyruvate: Gly-99 and Arg-128. 6 residues coordinate 3-phosphoshikimate: Ser-171, Ser-172, Gln-173, Ser-199, Asp-316, and Lys-343. Gln-173 serves as a coordination point for phosphoenolpyruvate. The Proton acceptor role is filled by Asp-316. Arg-347, Arg-390, and Lys-416 together coordinate phosphoenolpyruvate.

This sequence belongs to the EPSP synthase family. In terms of assembly, monomer.

The protein localises to the cytoplasm. It carries out the reaction 3-phosphoshikimate + phosphoenolpyruvate = 5-O-(1-carboxyvinyl)-3-phosphoshikimate + phosphate. Its pathway is metabolic intermediate biosynthesis; chorismate biosynthesis; chorismate from D-erythrose 4-phosphate and phosphoenolpyruvate: step 6/7. Catalyzes the transfer of the enolpyruvyl moiety of phosphoenolpyruvate (PEP) to the 5-hydroxyl of shikimate-3-phosphate (S3P) to produce enolpyruvyl shikimate-3-phosphate and inorganic phosphate. The chain is 3-phosphoshikimate 1-carboxyvinyltransferase from Deinococcus radiodurans (strain ATCC 13939 / DSM 20539 / JCM 16871 / CCUG 27074 / LMG 4051 / NBRC 15346 / NCIMB 9279 / VKM B-1422 / R1).